Reading from the N-terminus, the 274-residue chain is Histone H1.1 (274 aa).

Disordered stretches follow at residues 1 to 63 and 129 to 155; these read MSEV…SSHP and PSASAKASSPKAAAEKSAPAKKKPATV. N-acetylserine is present on Ser-2. Residues 16-25 show a composition bias toward low complexity; sequence TAADAPVTDA. The segment covering 40–49 has biased composition (basic and acidic residues); the sequence is NVKEVKEKKT. An H15 domain is found at 61-130; sequence SHPTYEEMIK…KVKASFKLPS (70 aa). The span at 129–145 shows a compositional bias: low complexity; sequence PSASAKASSPKAAAEKS. A Glycyl lysine isopeptide (Lys-Gly) (interchain with G-Cter in ubiquitin) cross-link involves residue Lys-161. Disordered stretches follow at residues 167-233 and 249-274; these read ASKA…PAKK and KTPVKKVVKPKTVKSPAKRASSRVKK. Low complexity-rich tracts occupy residues 175–185 and 221–233; these read AVKPKTAAAKK and AAKTAKVTSPAKK.

This sequence belongs to the histone H1/H5 family.

The protein localises to the nucleus. Its subcellular location is the chromosome. In terms of biological role, histones H1 are necessary for the condensation of nucleosome chains into higher-order structures. The sequence is that of Histone H1.1 from Arabidopsis thaliana (Mouse-ear cress).